Consider the following 113-residue polypeptide: Insulin (113 aa).

An N-terminal signal peptide occupies residues 1 to 24 (MAALWLQAFSLLVLMMVSWPGSQA). Disulfide bonds link Cys32–Cys99, Cys44–Cys112, and Cys98–Cys103. The propeptide at 56-90 (DVDPLLGFLPPKAGGAVVQGGENEVTFKDQMEMMV) is c peptide.

It belongs to the insulin family. As to quaternary structure, heterodimer of a B chain and an A chain linked by two disulfide bonds.

Its subcellular location is the secreted. In terms of biological role, insulin decreases blood glucose concentration. It increases cell permeability to monosaccharides, amino acids and fatty acids. It accelerates glycolysis, the pentose phosphate cycle, and glycogen synthesis in liver. In Oreochromis niloticus (Nile tilapia), this protein is Insulin (ins).